The primary structure comprises 60 residues: Cytotoxin 1 (60 aa).

4 disulfides stabilise this stretch: cysteine 3/cysteine 21, cysteine 14/cysteine 38, cysteine 42/cysteine 53, and cysteine 54/cysteine 59.

Belongs to the three-finger toxin family. Short-chain subfamily. Type IA cytotoxin sub-subfamily. As to quaternary structure, monomer in solution; Homodimer and oligomer in the presence of negatively charged lipids forming a pore with a size ranging between 20 and 30 Angstroms. Expressed by the venom gland.

The protein resides in the secreted. Its subcellular location is the target cell membrane. Its function is as follows. Shows cytolytic activity on many different cells by forming pore in lipid membranes. In vivo, increases heart rate or kills the animal by cardiac arrest. In addition, it binds to heparin with high affinity, interacts with Kv channel-interacting protein 1 (KCNIP1) in a calcium-independent manner, and binds to integrin alpha-V/beta-3 (ITGAV/ITGB3) with moderate affinity. This chain is Cytotoxin 1, found in Naja melanoleuca (Forest cobra).